The chain runs to 305 residues: RxLR effector protein 17 (305 aa).

An N-terminal signal peptide occupies residues 1-24; the sequence is MQSILWFALIASVVFLVLVDLASG. The short motif at 45-60 is the RxLR-dEER element; it reads RLLRAAHLDRKLSEER. N-linked (GlcNAc...) asparagine glycans are attached at residues Asn207 and Asn227. The segment at 247–269 is w motif; the sequence is LHLKWAVEAKSPKDVVERILKDL.

The protein belongs to the RxLR effector family. Interacts with host A.thaliana At1G14340.

Its subcellular location is the secreted. It is found in the host cell membrane. Functionally, secreted effector that confers enhanced plant susceptibility during both compatible and incompatible interactions between the pathogen and its host. Promotes the sexual reproduction of the pathogen in the plant host. This Hyaloperonospora arabidopsidis (strain Emoy2) (Downy mildew agent) protein is RxLR effector protein 17.